Consider the following 102-residue polypeptide: Iron-sulfur cluster assembly protein CyaY (102 aa).

It belongs to the frataxin family.

Its function is as follows. Involved in iron-sulfur (Fe-S) cluster assembly. May act as a regulator of Fe-S biogenesis. The protein is Iron-sulfur cluster assembly protein CyaY of Mannheimia succiniciproducens (strain KCTC 0769BP / MBEL55E).